A 261-amino-acid chain; its full sequence is Kynurenine formamidase (261 aa).

A Phosphoserine modification is found at serine 9. An HGGXW motif is present at residues 36–40 (HGGAW). Serine 110 serves as the catalytic Nucleophile. Active-site residues include aspartate 211 and histidine 243.

This sequence belongs to the kynurenine formamidase family. As to quaternary structure, homodimer.

It catalyses the reaction N-formyl-L-kynurenine + H2O = L-kynurenine + formate + H(+). It functions in the pathway amino-acid degradation; L-tryptophan degradation via kynurenine pathway; L-kynurenine from L-tryptophan: step 2/2. In terms of biological role, catalyzes the hydrolysis of N-formyl-L-kynurenine to L-kynurenine, the second step in the kynurenine pathway of tryptophan degradation. Kynurenine may be further oxidized to nicotinic acid, NAD(H) and NADP(H). Required for elimination of toxic metabolites. The protein is Kynurenine formamidase of Saccharomyces cerevisiae (strain ATCC 204508 / S288c) (Baker's yeast).